Here is a 306-residue protein sequence, read N- to C-terminus: Transcription initiation factor IIB (306 aa).

Repeat copies occupy residues 122 to 205 and 216 to 297.

It belongs to the TFIIB family.

Its function is as follows. Stabilizes TBP binding to an archaeal box-A promoter. Also responsible for recruiting RNA polymerase II to the pre-initiation complex (DNA-TBP-TFIIB). The protein is Transcription initiation factor IIB of Saccharolobus shibatae (strain ATCC 51178 / DSM 5389 / JCM 8931 / NBRC 15437 / B12) (Sulfolobus shibatae).